Consider the following 132-residue polypeptide: Fatty acid-binding protein, adipocyte (132 aa).

Residue cysteine 2 is modified to N-acetylcysteine. Serine 13 is modified (phosphoserine). Tyrosine 20 is subject to Phosphotyrosine; by Tyr-kinases. Residues 22–32 carry the Nuclear localization signal motif; the sequence is KEVGVGFATRK. Residue 127–129 coordinates a fatty acid; the sequence is RVY.

The protein belongs to the calycin superfamily. Fatty-acid binding protein (FABP) family. Monomer. Homodimer. Interacts with PPARG.

It is found in the cytoplasm. The protein resides in the nucleus. Functionally, lipid transport protein in adipocytes. Binds both long chain fatty acids and retinoic acid. Delivers long-chain fatty acids and retinoic acid to their cognate receptors in the nucleus. FABPs are important elements related to the hibernating state in mammals. The protein is Fatty acid-binding protein, adipocyte (FABP4) of Ictidomys tridecemlineatus (Thirteen-lined ground squirrel).